We begin with the raw amino-acid sequence, 35 residues long: Cupiennin-2d (35 aa).

Residue Gln35 is modified to Glutamine amide.

Expressed by the venom gland.

The protein resides in the secreted. The polypeptide is Cupiennin-2d (Cupiennius salei (American wandering spider)).